The following is an 87-amino-acid chain: MGSFSITHWLILLVVVVVVFGTSKLRNAGKDLGGAVKGFKEAVKDENTEHAKKHVVLDHDAGTNPPNITGTQSDTTSANKVDDTHNV.

Residues 1–21 (MGSFSITHWLILLVVVVVVFG) traverse the membrane as a helical segment. The segment at 56–87 (VLDHDAGTNPPNITGTQSDTTSANKVDDTHNV) is disordered. Positions 64 to 79 (NPPNITGTQSDTTSAN) are enriched in polar residues.

The protein belongs to the TatA/E family. As to quaternary structure, the Tat system comprises two distinct complexes: a TatABC complex, containing multiple copies of TatA, TatB and TatC subunits, and a separate TatA complex, containing only TatA subunits. Substrates initially bind to the TatABC complex, which probably triggers association of the separate TatA complex to form the active translocon.

It localises to the cell inner membrane. Functionally, part of the twin-arginine translocation (Tat) system that transports large folded proteins containing a characteristic twin-arginine motif in their signal peptide across membranes. TatA could form the protein-conducting channel of the Tat system. The chain is Sec-independent protein translocase protein TatA from Psychrobacter arcticus (strain DSM 17307 / VKM B-2377 / 273-4).